The primary structure comprises 222 residues: RNA chaperone ProQ (222 aa).

Over residues 94-113 (EHADHAKQQLDESKAKAAEK) the composition is skewed to basic and acidic residues. The interval 94 to 171 (EHADHAKQQL…PAKLTDSDLQ (78 aa)) is disordered. Residues 114-131 (RKAKLAQQPKRKDKRQFN) are compositionally biased toward basic residues. Positions 133–148 (PKGEKSANSDHADTKR) are enriched in basic and acidic residues. The span at 155–164 (NRPNTTPPAK) shows a compositional bias: low complexity.

This sequence belongs to the ProQ family.

It is found in the cytoplasm. In terms of biological role, RNA chaperone with significant RNA binding, RNA strand exchange and RNA duplexing activities. In Alteromonas mediterranea (strain DSM 17117 / CIP 110805 / LMG 28347 / Deep ecotype), this protein is RNA chaperone ProQ.